The chain runs to 176 residues: ATP-dependent protease subunit HslV (176 aa).

Thr-6 is an active-site residue. Residues Ser-161, Cys-164, and Thr-167 each coordinate Na(+).

The protein belongs to the peptidase T1B family. HslV subfamily. A double ring-shaped homohexamer of HslV is capped on each side by a ring-shaped HslU homohexamer. The assembly of the HslU/HslV complex is dependent on binding of ATP.

The protein resides in the cytoplasm. The enzyme catalyses ATP-dependent cleavage of peptide bonds with broad specificity.. Allosterically activated by HslU binding. Protease subunit of a proteasome-like degradation complex believed to be a general protein degrading machinery. This chain is ATP-dependent protease subunit HslV, found in Aquifex aeolicus (strain VF5).